Reading from the N-terminus, the 453-residue chain is Prenyltransferase nscD (453 aa).

Residues Arg118, Lys200, Tyr202, Lys271, Tyr273, and Tyr428 each contribute to the dimethylallyl diphosphate site.

The protein belongs to the tryptophan dimethylallyltransferase family.

Its pathway is secondary metabolite biosynthesis. In terms of biological role, prenyltransferase; part of the gene cluster that mediates the biosynthesis of neosartoricin, a prenylated anthracenone that exhibits T-cell antiproliferative activity, suggestive of a physiological role as an immunosuppressive agent. The non-reducing polyketide synthase nscA probably synthesizes and cyclizes the decaketide backbone. The hydrolase nscB then mediates the product release through hydrolysis followed by spontaneous decarboxylation. The prenyltransferase nscD catalyzes the addition of the dimethylallyl group to the aromatic C5. The FAD-dependent monooxygenase nscC is then responsible for the stereospecific hydroxylation at C2. There is no gene encoding O-acetyltransferase in the nsc gene cluster; thus, the last step of 2-O-acetylation leading to neosartoricin may be catalyzed by an unidentified O-acetyltransferase. This chain is Prenyltransferase nscD, found in Aspergillus fumigatus (strain ATCC MYA-4609 / CBS 101355 / FGSC A1100 / Af293) (Neosartorya fumigata).